Reading from the N-terminus, the 638-residue chain is Chaperone protein HtpG (638 aa).

Residues 1–346 (MSQQETHGFQ…SNDLPLNVSR (346 aa)) form an a; substrate-binding region. A b region spans residues 347 to 563 (EILQDNKVTT…EGEMSTQMIK (217 aa)). The tract at residues 564–638 (LMQAAGQDVP…MNQMLLASVK (75 aa)) is c.

This sequence belongs to the heat shock protein 90 family. As to quaternary structure, homodimer.

The protein resides in the cytoplasm. In terms of biological role, molecular chaperone. Has ATPase activity. In Shewanella pealeana (strain ATCC 700345 / ANG-SQ1), this protein is Chaperone protein HtpG.